We begin with the raw amino-acid sequence, 245 residues long: Mitochondrial import inner membrane translocase subunit Tim21 (245 aa).

The N-terminal 18 residues, 1 to 18 (MICAFLRVVRHAEKLHGS), are a transit peptide targeting the mitochondrion. The tract at residues 64–97 (FWTQGPDPRKAKEDSSKQVSINRNQREETGVSTS) is disordered. Positions 70–79 (DPRKAKEDSS) are enriched in basic and acidic residues. The helical transmembrane segment at 108-128 (TYLIVVLFGVSITGSLLYTIF) threads the bilayer.

The protein belongs to the TIM21 family. In terms of assembly, component of the TIM23 complex. Component of the MITRAC (mitochondrial translation regulation assembly intermediate of cytochrome c oxidase complex) complex, the core components of this complex being COA3/MITRAC12 and COX14. Interacts with COA3 and MT-CO1/COX1.

It is found in the mitochondrion membrane. In terms of biological role, participates in the translocation of transit peptide-containing proteins across the mitochondrial inner membrane. Also required for assembly of mitochondrial respiratory chain complex I and complex IV as component of the MITRAC (mitochondrial translation regulation assembly intermediate of cytochrome c oxidase complex) complex. Probably shuttles between the presequence translocase and respiratory-chain assembly intermediates in a process that promotes incorporation of early nuclear-encoded subunits into these complexes. The protein is Mitochondrial import inner membrane translocase subunit Tim21 (Timm21) of Rattus norvegicus (Rat).